The primary structure comprises 595 residues: MAPRKTKPATKPAAKPTPASTATTSSCPSPKSFPIPMEVDDFSFSDSELSDAQSLIEPEGFSLLSPDESSGGRSQDELPPARKKRRVAGPKERRTQHLDLTPRLGFSDYGDQEPQLNLLVNTIRNHKKIVVIAGAGISTSAGIPDFRSDDGLFKTLQKKHNLKASGKLMFDAAVYQDEALTASFQEMVRSLSEEAEKSSPTAFHHMLARLGSDNRLTRLYTQNIDGIETSMPPLATQIPLNVKAPWPRTIQLHGSLEKMVCQKCRHMSTFDRVMFDRPDAPECPECVLTNQFRMETGQRSHGIGKMRPRIVLYNEHNPDEEAITSVMNADIRSRPDALIVVGTSLKIPGVRRLVKSLCSVIRSRRNGVTMWINNEPPSGKEFEDCFDLLVKGDCEEVARLAQLKRWDDDSKPIFDECQSADVERVKNEQGPLSVVITTPKKEKVQAQTGMLTPSSSYDGDVENASTTTLSNPASKGRKLTEILKASKKDAPKTESAGVKKPAPRKRTKKEPVKNAKITTFSKVTKAQKVTPEEKSVKLEEHKAMHPLPPGAARTNAPMLPGLAKDDSKSTPSGKRGQLETISPDRIPKGMGKLLD.

The interval 1-106 (MAPRKTKPAT…HLDLTPRLGF (106 aa)) is disordered. Positions 9–32 (ATKPAAKPTPASTATTSSCPSPKS) are enriched in low complexity. One can recognise a Deacetylase sirtuin-type domain in the interval 109–428 (YGDQEPQLNL…SADVERVKNE (320 aa)). Residues 134 to 153 (GAGI…DGLF) and 222 to 225 (QNID) contribute to the NAD(+) site. H253 functions as the Proton acceptor in the catalytic mechanism. C261, C264, C283, and C286 together coordinate Zn(2+). NAD(+) is bound by residues 342–344 (GTS), 373–375 (NNE), and C394. Polar residues predominate over residues 445-473 (QAQTGMLTPSSSYDGDVENASTTTLSNPA). A disordered region spans residues 445 to 595 (QAQTGMLTPS…IPKGMGKLLD (151 aa)). 2 stretches are compositionally biased toward basic and acidic residues: residues 478–492 (KLTE…DAPK) and 530–543 (TPEE…EHKA).

This sequence belongs to the sirtuin family. Class I subfamily. It depends on Zn(2+) as a cofactor.

The protein resides in the nucleus. The enzyme catalyses N(6)-acetyl-L-lysyl-[protein] + NAD(+) + H2O = 2''-O-acetyl-ADP-D-ribose + nicotinamide + L-lysyl-[protein]. In terms of biological role, NAD-dependent histone deacetylase, which could function in telomeric silencing, cell cycle progression and chromosome stability. The protein is NAD-dependent protein deacetylase hst4 of Emericella nidulans (strain FGSC A4 / ATCC 38163 / CBS 112.46 / NRRL 194 / M139) (Aspergillus nidulans).